The following is a 200-amino-acid chain: Small ribosomal subunit protein mS38 (200 aa).

The protein belongs to the mitochondrion-specific ribosomal protein mS38 family. As to quaternary structure, component of the mitochondrial ribosome small subunit (28S) which comprises a 12S rRNA and about 30 distinct proteins. Interacts with Aurora-A. In terms of tissue distribution, ubiquitously expressed and especially highly expressed in heart, skeletal muscle and testis.

The protein localises to the mitochondrion matrix. The protein resides in the nucleus. In terms of biological role, may act as a negative regulator of Aurora-A kinase, by down-regulation through proteasome-dependent degradation. This chain is Small ribosomal subunit protein mS38 (Aurkaip1), found in Mus musculus (Mouse).